We begin with the raw amino-acid sequence, 219 residues long: Histone H1.01 (219 aa).

Low complexity-rich tracts occupy residues 1 to 19 (MSET…GAKA) and 27 to 39 (AAGG…PAGP). Disordered stretches follow at residues 1–40 (MSET…AGPS) and 94–219 (LVQT…AKKK). Serine 2 carries the N-acetylserine modification. One can recognise an H15 domain in the interval 37–110 (AGPSVTELIT…GASGSFRLNK (74 aa)). 4 stretches are compositionally biased toward basic residues: residues 119–134 (APRK…KPAA), 142–159 (KKPK…KAKK), 167–185 (KAAK…KKAA), and 192–219 (KAVK…AKKK).

It belongs to the histone H1/H5 family.

Its subcellular location is the nucleus. The protein resides in the chromosome. Functionally, histones H1 are necessary for the condensation of nucleosome chains into higher-order structures. In Gallus gallus (Chicken), this protein is Histone H1.01.